The chain runs to 485 residues: Sodium-coupled neutral amino acid symporter 1 (485 aa).

Topologically, residues 1–74 (MMHFKSGLEL…EYIPGTTSLG (74 aa)) are cytoplasmic. At S6 the chain carries Phosphoserine. T11 is modified (phosphothreonine). 4 positions are modified to phosphoserine: S25, S28, S49, and S52. T54 is modified (phosphothreonine). Residue S56 is modified to Phosphoserine. A helical transmembrane segment spans residues 75 to 97 (MSVFNLSNAIMGSGILGLAFALA). Residues 98 to 112 (NTGILLFLILLTSVT) are Extracellular-facing. The helical transmembrane segment at 113 to 133 (LLSIYSINLLLICSKETGCMV) threads the bilayer. Residues 134–148 (YEKLGEQVFGTTGKL) are Cytoplasmic-facing. A helical membrane pass occupies residues 149 to 169 (VIFGATSLQNTGAMLSYLFIV). Topologically, residues 170–188 (KNELPSAIKSLMGEEDAFS) are extracellular. A helical membrane pass occupies residues 189–211 (AWYVDGRVLVVMVTFGIILPLCL). Topologically, residues 212–216 (LKNLG) are cytoplasmic. A helical transmembrane segment spans residues 217 to 237 (YLGYTSGFSLSCMMFFLIVVI). Residues 238–273 (YKKFQTPCMSVEQNSTVSANVTDACTPKYVTFNSKT) lie on the Extracellular side of the membrane. Residues C245 and C262 are joined by a disulfide bond. Residues N251 and N257 are each glycosylated (N-linked (GlcNAc...) asparagine). A helical membrane pass occupies residues 274 to 294 (VYALPTIAFAFVCHPSVLPIY). Over 295–310 (SELKDRSQKKMQMVSN) the chain is Cytoplasmic. The chain crosses the membrane as a helical span at residues 311 to 331 (ISFFAMFVMYFLTAIFGYLTF). The Extracellular portion of the chain corresponds to 332 to 348 (YEKVQSDLLHKYQSTGD). Residues 349–369 (ILILTVRLAVIVAVILTVPVL) traverse the membrane as a helical segment. The Cytoplasmic portion of the chain corresponds to 370–391 (FFTVRSSLFELAKKTKFHLCRH). Residues 392-412 (VLVTIILLIIINLLVIFIPSM) form a helical membrane-spanning segment. Topologically, residues 413–414 (KD) are extracellular. The helical transmembrane segment at 415 to 435 (IFGVVGVTSANMLIFILPSSL) threads the bilayer. At 436-450 (YLKITNQDGDKGTQR) the chain is on the cytoplasmic side. Residues 451–471 (IWAALFLGLGVLFSLISIPLV) traverse the membrane as a helical segment. Residues 472-485 (IYDWACSSGTDEGH) are Extracellular-facing.

This sequence belongs to the amino acid/polyamine transporter 2 family. In terms of processing, N-glycosylation plays an important role in the L-glutamine transport. As to expression, specifically expressed in brain and retina (at protein level). Also detected in spleen, small intestine and lung.

It is found in the cell membrane. The enzyme catalyses L-glutamine(in) + Na(+)(in) = L-glutamine(out) + Na(+)(out). It carries out the reaction L-alanine(in) + Na(+)(in) = L-alanine(out) + Na(+)(out). The catalysed reaction is L-histidine(in) + Na(+)(in) = L-histidine(out) + Na(+)(out). It catalyses the reaction L-asparagine(in) + Na(+)(in) = L-asparagine(out) + Na(+)(out). The enzyme catalyses L-serine(in) + Na(+)(in) = L-serine(out) + Na(+)(out). It carries out the reaction L-cysteine(in) + Na(+)(in) = L-cysteine(out) + Na(+)(out). The catalysed reaction is L-methionine(in) + Na(+)(in) = L-methionine(out) + Na(+)(out). It catalyses the reaction glycine(in) + Na(+)(in) = glycine(out) + Na(+)(out). The enzyme catalyses L-threonine(in) + Na(+)(in) = L-threonine(out) + Na(+)(out). It carries out the reaction L-proline(in) + Na(+)(in) = L-proline(out) + Na(+)(out). Its activity is regulated as follows. Inhibited by alpha-(methylamino)isobutyric acid (MeAIB). Inhibited by lithium, potassium, choline ions, N-methylglucamine. The pH dependence has an allosteric effect on the transport. In terms of biological role, symporter that cotransports short-chain neutral amino acids and sodium ions from the extraccellular to the intracellular side of the cell membrane. The transport is elctrogenic, pH dependent and driven by the Na(+) electrochemical gradient. Participates in the astroglia-derived glutamine transport into GABAergic interneurons for neurotransmitter GABA de novo synthesis. May also contributes to amino acid transport in placental trophoblast. Regulates synaptic plasticity. In Mus musculus (Mouse), this protein is Sodium-coupled neutral amino acid symporter 1.